The chain runs to 172 residues: Transcriptional repressor NrdR (172 aa).

A zinc finger spans residues 3-34; it reads CPFCSYSDNRVLESRLAEEGESVRRRRECKQC. An ATP-cone domain is found at 49–139; it reads TVVIKRNGRR…VYRKFKGVAD (91 aa).

This sequence belongs to the NrdR family. Zn(2+) serves as cofactor.

In terms of biological role, negatively regulates transcription of bacterial ribonucleotide reductase nrd genes and operons by binding to NrdR-boxes. In Gloeobacter violaceus (strain ATCC 29082 / PCC 7421), this protein is Transcriptional repressor NrdR.